The primary structure comprises 235 residues: MLTRKQYELLMFIDERLRATGISPSFDEMKDALDLKSKSGIHRLITGLEERGFIRRLAHRARALEVVRLPENRNDQTLPPPAKAFAPNVIKGGFAASQLAGAPVAGPSDSVTLPLYGKIAAGTPIEALRDHSNSVDIPASMLGSGNHYALTVDGDSMIEAGINDGDTVVIRSCDSAETGTIVVALVDDTEVTLKRLRRKGTSVALEPANKAYETRVLPPDRVKVQGRLVGLLRRY.

A DNA-binding region (H-T-H motif) is located at residues 26 to 46 (FDEMKDALDLKSKSGIHRLIT). Residues Ser156 and Lys194 each act as for autocatalytic cleavage activity in the active site.

It belongs to the peptidase S24 family. As to quaternary structure, homodimer.

The enzyme catalyses Hydrolysis of Ala-|-Gly bond in repressor LexA.. Functionally, represses a number of genes involved in the response to DNA damage (SOS response), including recA and lexA. In the presence of single-stranded DNA, RecA interacts with LexA causing an autocatalytic cleavage which disrupts the DNA-binding part of LexA, leading to derepression of the SOS regulon and eventually DNA repair. This is LexA repressor from Paramagnetospirillum magneticum (strain ATCC 700264 / AMB-1) (Magnetospirillum magneticum).